We begin with the raw amino-acid sequence, 258 residues long: Imidazole glycerol phosphate synthase subunit HisF (258 aa).

Active-site residues include Asp11 and Asp130.

It belongs to the HisA/HisF family. In terms of assembly, heterodimer of HisH and HisF.

The protein localises to the cytoplasm. The catalysed reaction is 5-[(5-phospho-1-deoxy-D-ribulos-1-ylimino)methylamino]-1-(5-phospho-beta-D-ribosyl)imidazole-4-carboxamide + L-glutamine = D-erythro-1-(imidazol-4-yl)glycerol 3-phosphate + 5-amino-1-(5-phospho-beta-D-ribosyl)imidazole-4-carboxamide + L-glutamate + H(+). Its pathway is amino-acid biosynthesis; L-histidine biosynthesis; L-histidine from 5-phospho-alpha-D-ribose 1-diphosphate: step 5/9. IGPS catalyzes the conversion of PRFAR and glutamine to IGP, AICAR and glutamate. The HisF subunit catalyzes the cyclization activity that produces IGP and AICAR from PRFAR using the ammonia provided by the HisH subunit. The protein is Imidazole glycerol phosphate synthase subunit HisF of Escherichia fergusonii (strain ATCC 35469 / DSM 13698 / CCUG 18766 / IAM 14443 / JCM 21226 / LMG 7866 / NBRC 102419 / NCTC 12128 / CDC 0568-73).